The primary structure comprises 198 residues: Inosine triphosphate pyrophosphatase (198 aa).

Ala-2 is subject to N-acetylalanine. 14 to 19 (TGNAKK) is an ITP binding site. Glu-44 is a binding site for Mg(2+). ITP contacts are provided by residues Lys-56, 72-73 (DT), and Lys-89. Position 146 is a phosphoserine (Ser-146). ITP is bound by residues 149-152 (FGWD), Lys-172, and 177-178 (HR).

This sequence belongs to the HAM1 NTPase family. Homodimer. The cofactor is Mg(2+). Mn(2+) serves as cofactor.

It is found in the cytoplasm. The enzyme catalyses ITP + H2O = IMP + diphosphate + H(+). It carries out the reaction dITP + H2O = dIMP + diphosphate + H(+). It catalyses the reaction XTP + H2O = XMP + diphosphate + H(+). The catalysed reaction is N(6)-hydroxy-dATP + H2O = N(6)-hydroxy-dAMP + diphosphate + H(+). In terms of biological role, pyrophosphatase that hydrolyzes the non-canonical purine nucleotides inosine triphosphate (ITP), deoxyinosine triphosphate (dITP) as well as 2'-deoxy-N-6-hydroxylaminopurine triphosphate (dHAPTP) and xanthosine 5'-triphosphate (XTP) to their respective monophosphate derivatives. The enzyme does not distinguish between the deoxy- and ribose forms. Probably excludes non-canonical purines from RNA and DNA precursor pools, thus preventing their incorporation into RNA and DNA and avoiding chromosomal lesions. This chain is Inosine triphosphate pyrophosphatase (Itpa), found in Mus musculus (Mouse).